A 1320-amino-acid polypeptide reads, in one-letter code: MFPMQFTNSAYRQMEPMFAPGSRGQVQPYRPRTKRRQEPQVGNAAITALANQMSALQLQVAGLAGQARVDRRGPRRVQKNKQKKKNSSNGEKPKEKKKKQKQQEKKGSGGEKVKKTRNRPGKEVRISVKCARQSTFPVYHEGAISGYAVLIGSRVFKPAHVKGKIDHPELADIKFQVAEDMDLEAAAYPKSMRDQAAEPATMMDRVYNWEYGTIRVEDNVIIDASGRGKPGDSGRAITDNSGKVVGIVLGGGPDGRRTRLSVIGFDKKMKAREIAYSDAIPWTRAPALLLLPMVIVCTYNSNTFDCSKPSCQDCCITAEPEKAMTMLKDNLNDPNYWDLLIAVTTCGSARRKRAVSTSPAAFYDTQILAAHAAASPYRAYCPDCDGTACISPIAIDEVVSSGSDHVLRMRVGSQSGVTAKGGAAGETSLRYLGRDGKVHAADNTRLVVRTTAKCDVLQATGHYILANCPVGQSLTVAATLDGTRHQCTTVFEHQVTEKFTRERSKGHHLSDMTKKCTRFSTTPKKSALYLVDVYDALPISVEISTVVTCSDSQCTVRVPPGTTVKFDKKCKSADSATVTFTSDSQTFTCEEPVLTAASITQGKPHLRSAMLPSGGKEVKARIPFPFPPETATCRVSVAPLPSITYEESDVLLAGTAKYPVLLTTRNLGFHSNATSEWIQGKYLRRIPVTPQGIELTWGNNAPMHFWSSVRYASGDADAYPWELLVYHTKHHPEYAWAFVGVACGLLAIAACMFACACSRVRYSLVANTFNSNPPPLTALTAALCCIPGARADQPYLDIIAYLWTNSKVAFGLQFAAPVACVLIITYALRHCRLCCKSFLGVRGWSALLVILAYVQSCKSYEHTVVVPMDPRAPSYEAVINRNGYDPLKLTISVNFTVISPTTALEYWTCAGVPIVEPPHVGCCTSVSCPSDLSTLHAFTGKAVSDVHCDVHTNVYPLLWGAAHCFCSTENTQVSAVAATVSEFCAQDSERAEAFSVHSSSVTAEVLVTLGEVVTAVHVYVDGVTSARGTDLKIVAGPITTDYSPFDRKVVRIGEEVYNYDWPPYGAGRPGTFGDIQARSTNYVKPNDLYGDIGIEVLQPTNDHVHVAYTYTTSGLLRWLQDAPKPLSVTAPHGCKISANPLLALDCGVGAVPMSINIPDAKFTRKLKDPKPSALKCVVDSCEYGVDYGGAATITYEGHEAGKCGIHSLTPGVPLRTSVVEVVAGANTVKTTFSSPTPEVALEVEICSAIVKCAGECTPPKEHVVATRPRHGSDPGGYISGPAMRWAGGIVGTLVVLFLILAVIYCVVKKCRSKRIRIVKS.

Residues 1–734 are Extracellular-facing; the sequence is MFPMQFTNSA…VYHTKHHPEY (734 aa). Disordered stretches follow at residues 17-41 and 65-125; these read MFAP…EPQV and GQAR…KEVR. Residues 48–81 form a host transcription inhibition region; it reads ALANQMSALQLQVAGLAGQARVDRRGPRRVQKNK. The segment covering 73 to 86 has biased composition (basic residues); the sequence is GPRRVQKNKQKKKN. Positions 74 to 120 match the Nuclear localization signal motif; sequence PRRVQKNKQKKKNSSNGEKPKEKKKKQKQQEKKGSGGEKVKKTRNRP. Basic and acidic residues predominate over residues 101-113; it reads KQQEKKGSGGEKV. Residues 101–135 form a binding to the viral RNA region; sequence KQQEKKGSGGEKVKKTRNRPGKEVRISVKCARQST. Residues 120–134 form a ribosome-binding region; it reads PGKEVRISVKCARQS. The Peptidase S3 domain maps to 134-282; sequence STFPVYHEGA…EIAYSDAIPW (149 aa). Residue histidine 160 is the Charge relay system of the active site. The Nuclear export signal signature appears at 165–175; sequence IDHPELADIKF. Residue aspartate 182 is the Charge relay system of the active site. The dimerization of the capsid protein stretch occupies residues 203-213; the sequence is MDRVYNWEYGT. Serine 233 acts as the Charge relay system in catalysis. The segment at 239 to 243 is dimerization of the capsid protein; that stretch reads DNSGK. Positions 283-302 are functions as an uncleaved signal peptide for the precursor of protein E3/E2; that stretch reads TRAPALLLLPMVIVCTYNSN. Disulfide bonds link cysteine 297-cysteine 306, cysteine 381-cysteine 487, cysteine 384-cysteine 389, cysteine 454-cysteine 468, and cysteine 516-cysteine 633. A helical membrane pass occupies residues 735-755; the sequence is AWAFVGVACGLLAIAACMFAC. The Cytoplasmic segment spans residues 756–791; that stretch reads ACSRVRYSLVANTFNSNPPPLTALTAALCCIPGARA. The segment at 760–784 is transient transmembrane before p62-6K protein processing; sequence VRYSLVANTFNSNPPPLTALTAALC. S-palmitoyl cysteine; by host attachment occurs at residues cysteine 784 and cysteine 785. The Extracellular portion of the chain corresponds to 792 to 807; it reads DQPYLDIIAYLWTNSK. The helical transmembrane segment at 808-828 threads the bilayer; it reads VAFGLQFAAPVACVLIITYAL. Over 829–836 the chain is Cytoplasmic; sequence RHCRLCCK. The helical transmembrane segment at 837 to 857 threads the bilayer; the sequence is SFLGVRGWSALLVILAYVQSC. At 858–1286 the chain is on the extracellular side; sequence KSYEHTVVVP…YISGPAMRWA (429 aa). 8 disulfide bridges follow: cysteine 909-cysteine 984, cysteine 922-cysteine 964, cysteine 923-cysteine 966, cysteine 928-cysteine 948, cysteine 1134-cysteine 1146, cysteine 1176-cysteine 1252, cysteine 1181-cysteine 1256, and cysteine 1203-cysteine 1246. Residues 954–971 are E1 fusion peptide loop; it reads VYPLLWGAAHCFCSTENT. A helical membrane pass occupies residues 1287–1307; the sequence is GGIVGTLVVLFLILAVIYCVV. Over 1308–1320 the chain is Cytoplasmic; the sequence is KKCRSKRIRIVKS. Cysteine 1310 carries S-stearoyl cysteine; by host lipidation.

In terms of assembly, homodimer. Homomultimer. Interacts with host karyopherin KPNA4; this interaction allows the nuclear import of the viral capsid protein. Interacts with spike glycoprotein E2. Interacts with host IRAK1; the interaction leads to inhibition of IRAK1-dependent signaling. The precursor of protein E3/E2 and E1 form a heterodimer shortly after synthesis. As to quaternary structure, interacts with spike glycoprotein E2. The precursor of protein E3/E2 and E1 form a heterodimer shortly after synthesis. Processing of the precursor of protein E3/E2 into E2 and E3 results in a heterodimer of the spike glycoproteins E2 and E1. Spike at virion surface are constituted of three E2-E1 heterodimers. After target cell attachment and endocytosis, E1 change conformation to form homotrimers. Interacts with 6K protein. In terms of assembly, interacts with spike glycoprotein E1. Processing of the precursor of protein E3/E2 into E2 and E3 results in a heterodimer of the spike glycoproteins E2 and E1. Spike at virion surface are constituted of a trimer of E2-E1 heterodimers. Interacts with 6K protein. Oligomer. Interacts with spike glycoprotein E1. Interacts with spike glycoprotein E2. Structural polyprotein: Specific enzymatic cleavages in vivo yield mature proteins. Capsid protein is auto-cleaved during polyprotein translation, unmasking a signal peptide at the N-terminus of the precursor of E3/E2. The remaining polyprotein is then targeted to the host endoplasmic reticulum, where host signal peptidase cleaves it into pE2, 6K and E1 proteins. pE2 is further processed to mature E3 and E2 by host furin in trans-Golgi vesicle. Post-translationally, palmitoylated via thioester bonds. These palmitoylations may induce disruption of the C-terminus transmembrane. This would result in the reorientation of E2 C-terminus from lumenal to cytoplasmic side. In terms of processing, N-glycosylated. Palmitoylated via thioester bonds.

It is found in the virion. The protein localises to the host cytoplasm. Its subcellular location is the host cell membrane. It localises to the host nucleus. The protein resides in the virion membrane. It is found in the host Golgi apparatus. The protein localises to the host trans-Golgi network. Its subcellular location is the host endoplasmic reticulum. It carries out the reaction Autocatalytic release of the core protein from the N-terminus of the togavirus structural polyprotein by hydrolysis of a -Trp-|-Ser- bond.. Functionally, forms an icosahedral capsid with a T=4 symmetry composed of 240 copies of the capsid protein surrounded by a lipid membrane through which penetrate 80 spikes composed of trimers of E1-E2 heterodimers. The capsid protein binds to the viral RNA genome at a site adjacent to a ribosome binding site for viral genome translation following genome release. Possesses a protease activity that results in its autocatalytic cleavage from the nascent structural protein. Following its self-cleavage, the capsid protein transiently associates with ribosomes, and within several minutes the protein binds to viral RNA and rapidly assembles into icosahedric core particles. The resulting nucleocapsid eventually associates with the cytoplasmic domain of the spike glycoprotein E2 at the cell membrane, leading to budding and formation of mature virions. In case of infection, new virions attach to target cells and after clathrin-mediated endocytosis their membrane fuses with the host endosomal membrane. This leads to the release of the nucleocapsid into the cytoplasm, followed by an uncoating event necessary for the genomic RNA to become accessible. The uncoating might be triggered by the interaction of capsid proteins with ribosomes. Binding of ribosomes would release the genomic RNA since the same region is genomic RNA-binding and ribosome-binding. Specifically inhibits interleukin-1 receptor-associated kinase 1/IRAK1-dependent signaling during viral entry, representing a means by which the alphaviruses may evade innate immune detection and activation prior to viral gene expression. Provides the signal sequence for the translocation of the precursor of protein E3/E2 to the host endoplasmic reticulum. Furin-cleaved E3 remains associated with spike glycoprotein E1 and mediates pH protection of the latter during the transport via the secretory pathway. After virion release from the host cell, the assembly protein E3 is gradually released in the extracellular space. Its function is as follows. Plays a role in viral attachment to target host cell, by binding to the cell receptor. Synthesized as a p62 precursor which is processed by furin at the cell membrane just before virion budding, giving rise to E2-E1 heterodimer. The p62-E1 heterodimer is stable, whereas E2-E1 is unstable and dissociate at low pH. p62 is processed at the last step, presumably to avoid E1 fusion activation before its final export to cell surface. E2 C-terminus contains a transitory transmembrane that would be disrupted by palmitoylation, resulting in reorientation of the C-terminal tail from lumenal to cytoplasmic side. This step is critical since E2 C-terminus is involved in budding by interacting with capsid proteins. This release of E2 C-terminus in cytoplasm occurs lately in protein export, and precludes premature assembly of particles at the endoplasmic reticulum membrane. In terms of biological role, acts as a viroporin that participates in virus glycoprotein processing and transport to the plasma membrane, cell permeabilization and budding of viral particles. Disrupts the calcium homeostasis of the cell, probably at the endoplasmic reticulum level. This leads to cytoplasmic calcium elevation. Because of its lipophilic properties, the 6K protein is postulated to influence the selection of lipids that interact with the transmembrane domains of the glycoproteins, which, in turn, affects the deformability of the bilayer required for the extreme curvature that occurs as budding proceeds. Present in low amount in virions, about 3% compared to viral glycoproteins. Functionally, class II viral fusion protein. Fusion activity is inactive as long as E1 is bound to E2 in mature virion. After virus attachment to target cell and endocytosis, acidification of the endosome induce dissociation of E1/E2 heterodimer and concomitant trimerization of the E1 subunits. This E1 trimer is fusion active, and promotes release of viral nucleocapsid in cytoplasm after endosome and viral membrane fusion. Efficient fusion requires the presence of cholesterol and sphingolipid in the target membrane. The chain is Structural polyprotein from Oncorhynchus mykiss (Rainbow trout).